The chain runs to 662 residues: FAST kinase domain-containing protein 3, mitochondrial (662 aa).

Residues 591-649 (IALCIDGPKRFCSNSKHLLGKEAIKQRHLQLLGYQVVQIPYHEIGMLKSRRELVEYLQR) enclose the RAP domain.

It belongs to the FAST kinase family. Expression detected in spleen, thymus, testis, ovary, colon, heart, smooth muscle, kidney, brain, lung, liver and white adipose tissue with highest expression in liver and thyroid.

The protein resides in the mitochondrion. Required for normal mitochondrial respiration. Increases steady-state levels and half-lives of a subset of mature mitochondrial mRNAs MT-ND2, MT-ND3, MT-CYTB, MT-CO2, and MT-ATP8/6. Promotes MT-CO1 mRNA translation and increases mitochondrial complex IV assembly and activity. The protein is FAST kinase domain-containing protein 3, mitochondrial (FASTKD3) of Homo sapiens (Human).